A 104-amino-acid polypeptide reads, in one-letter code: L-rhamnose mutarotase (104 aa).

Residue Y18 coordinates substrate. The active-site Proton donor is the H22. Substrate is bound by residues Y41 and 76–77; that span reads WW.

It belongs to the rhamnose mutarotase family. In terms of assembly, homodimer.

It is found in the cytoplasm. It carries out the reaction alpha-L-rhamnose = beta-L-rhamnose. Its pathway is carbohydrate metabolism; L-rhamnose metabolism. Functionally, involved in the anomeric conversion of L-rhamnose. In Salmonella arizonae (strain ATCC BAA-731 / CDC346-86 / RSK2980), this protein is L-rhamnose mutarotase.